The primary structure comprises 194 residues: 13S globulin basic chain (194 aa).

A Cupin type-1 domain is found at 13-162 (ENIKSPQEAD…SFQISSEEAE (150 aa)).

The protein belongs to the 11S seed storage protein (globulins) family. As to quaternary structure, hexamer; each subunit is composed of an acidic and a basic chain derived from a single precursor and linked by a disulfide bond. As to expression, cotyledons and endosperm protein bodies.

Functionally, seed storage protein with a relatively high level of Lys and Met. This chain is 13S globulin basic chain, found in Fagopyrum esculentum (Common buckwheat).